We begin with the raw amino-acid sequence, 879 residues long: Phosphoenolpyruvate carboxylase (879 aa).

Catalysis depends on residues histidine 138 and lysine 545.

Belongs to the PEPCase type 1 family. Mg(2+) is required as a cofactor.

It carries out the reaction oxaloacetate + phosphate = phosphoenolpyruvate + hydrogencarbonate. Functionally, forms oxaloacetate, a four-carbon dicarboxylic acid source for the tricarboxylic acid cycle. This is Phosphoenolpyruvate carboxylase from Actinobacillus pleuropneumoniae serotype 5b (strain L20).